Reading from the N-terminus, the 303-residue chain is HTH-type transcriptional regulator LysG (303 aa).

The HTH lysR-type domain occupies 6-62; that stretch reads LDGPQLAALAAVVELGSFDAAAERLHVTPSAVSQRIKSLEQQVGQVLVVREKPCRAT. The H-T-H motif DNA-binding region spans 23–42; sequence FDAAAERLHVTPSAVSQRIK.

This sequence belongs to the LysR transcriptional regulatory family. As to quaternary structure, homodimer.

Positively regulates the expression of the exporter LysE and represses its own expression. This Mycobacterium bovis (strain ATCC BAA-935 / AF2122/97) protein is HTH-type transcriptional regulator LysG.